A 901-amino-acid chain; its full sequence is Desmocollin-2 (901 aa).

An N-terminal signal peptide occupies residues 1 to 27 (MEAARPSGSWNGALCRLLLLTLAILIF). Residues 28 to 135 (ASDACKNVTL…KEKVLRRAKR (108 aa)) constitute a propeptide that is removed on maturation. 2 N-linked (GlcNAc...) asparagine glycosylation sites follow: asparagine 34 and asparagine 166. 5 consecutive Cadherin domains span residues 136 to 243 (RWAP…YPIF), 244 to 355 (TEET…LPTF), 356 to 471 (TRTS…GPEC), 472 to 579 (NPPI…FIPK), and 580 to 694 (KTVI…QLGK). Residues 136–694 (RWAPIPCSML…IGGGGVQLGK (559 aa)) lie on the Extracellular side of the membrane. An N-linked (GlcNAc...) (complex) asparagine glycan is attached at asparagine 392. N-linked (GlcNAc...) asparagine glycans are attached at residues asparagine 546 and asparagine 629. The helical transmembrane segment at 695 to 715 (WAILAILLGIALLFCILFTLV) threads the bilayer. Topologically, residues 716–901 (CGASGTSKQP…RTLAEACMKR (186 aa)) are cytoplasmic. Phosphoserine occurs at positions 864, 868, and 873.

In terms of assembly, interacts with DSP, PKP2 and JUP. Interacts with DSG3; the interaction may limit the interaction of DSC3 with p38MAPK family members and therefore repress p38MAPK signaling activation. Expressed at intercalated disks in the heart, where it is colocalized with CDH2 (at protein level). Expressed in intestinal mucosal cells (at protein level).

The protein localises to the cell membrane. It is found in the cell junction. Its subcellular location is the desmosome. In terms of biological role, a component of desmosome cell-cell junctions which are required for positive regulation of cellular adhesion. Promotes timely incorporation of DSG2 into desmosome intercellular junctions and promotes interaction of desmosome cell junctions with intermediate filament cytokeratin, via modulation of DSP phosphorylation. Plays an important role in desmosome-mediated maintenance of intestinal epithelial cell intercellular adhesion strength and barrier function. Positively regulates wound healing of intestinal mucosa via promotion of epithelial cell migration, and also plays a role in mechanotransduction of force between intestinal epithelial cells and extracellular matrix. May contribute to epidermal cell positioning (stratification) by mediating differential adhesiveness between cells that express different isoforms. May promote p38MAPK signaling activation that facilitates keratinocyte migration. This is Desmocollin-2 from Homo sapiens (Human).